We begin with the raw amino-acid sequence, 250 residues long: Endomucin (250 aa).

The first 20 residues, 1–20 (MRLLQVTALFFLLSNSLCRG), serve as a signal peptide directing secretion. Composition is skewed to low complexity over residues 24–38 (KALT…SATT) and 45–60 (TNKS…TTNS). Disordered regions lie at residues 24 to 83 (KALT…ETTT) and 105 to 153 (NAVS…LTTA). N-linked (GlcNAc...) asparagine glycosylation is found at Asn46, Asn115, and Asn119. 2 stretches are compositionally biased toward polar residues: residues 105–135 (NAVS…NQLP) and 143–153 (TETPSASLTTA). The helical transmembrane segment at 180 to 200 (VILPVVIALIVITVLVFTLVG) threads the bilayer. A disordered region spans residues 210–250 (PGTPESGNDQPQSDKESVKLLTVKTISHESGEHSAQGKAKN). Residue Ser226 is modified to Phosphoserine.

In terms of processing, highly O-glycosylated. Sialic acid-rich glycoprotein.

The protein resides in the membrane. Endothelial sialomucin, also called endomucin or mucin-like sialoglycoprotein, which interferes with the assembly of focal adhesion complexes and inhibits interaction between cells and the extracellular matrix. The polypeptide is Endomucin (Emcn) (Rattus norvegicus (Rat)).